We begin with the raw amino-acid sequence, 1207 residues long: DNA-directed RNA polymerase subunit beta' (1207 aa).

The Zn(2+) site is built by Cys60, Cys62, Cys75, and Cys78. Mg(2+) contacts are provided by Asp450, Asp452, and Asp454. The Zn(2+) site is built by Cys819, Cys893, Cys900, and Cys903.

The protein belongs to the RNA polymerase beta' chain family. As to quaternary structure, the RNAP catalytic core consists of 2 alpha, 1 beta, 1 beta' and 1 omega subunit. When a sigma factor is associated with the core the holoenzyme is formed, which can initiate transcription. Mg(2+) serves as cofactor. It depends on Zn(2+) as a cofactor.

It catalyses the reaction RNA(n) + a ribonucleoside 5'-triphosphate = RNA(n+1) + diphosphate. In terms of biological role, DNA-dependent RNA polymerase catalyzes the transcription of DNA into RNA using the four ribonucleoside triphosphates as substrates. The chain is DNA-directed RNA polymerase subunit beta' from Streptococcus pyogenes serotype M12 (strain MGAS2096).